Here is a 99-residue protein sequence, read N- to C-terminus: uncharacterized protein (99 aa).

Residues 76–96 traverse the membrane as a helical segment; it reads VLLGLASGMIGGIIGMFMWVL.

It is found in the host membrane. This is an uncharacterized protein from Haemophilus phage HP1 (strain HP1c1) (Bacteriophage HP1).